The following is a 413-amino-acid chain: Multidrug resistance protein MdtA (413 aa).

An N-terminal signal peptide occupies residues 1–32; the sequence is MNAKRIRGLLIFAAVIAIAVLIWRHFTQTSPA. Positions 32-46 are enriched in polar residues; the sequence is AAPGTSEQHAARTSH. Residues 32–59 form a disordered region; it reads AAPGTSEQHAARTSHSGNNSSGNGGGRR.

The protein belongs to the membrane fusion protein (MFP) (TC 8.A.1) family. In terms of assembly, part of a tripartite efflux system composed of MdtA, MdtB and MdtC.

The protein localises to the cell inner membrane. The chain is Multidrug resistance protein MdtA from Pectobacterium carotovorum subsp. carotovorum (strain PC1).